The sequence spans 359 residues: MAELPRERMDQVLKRFELIETQMAAGPSPDAYVKLASEYSELQEVANSIRALRKAEAELEDLDTMLADKSIDREIRELAEIDREEVESRVEDMQQKLQVLLLPKDEADEKNAILEIRAGTGGDEAALFAGDLFRMYERYASERGWRVEVVSASEGEAGGYKEIIASVTGRGVFSRLKFESGVHRVQRVPATEAQGRIHTSAATVAVLPEAEDIDVDIKPEDIRIDTMRASGAGGQHVNTTDSAVRITHLPTGIMVVSAEKSQHQNRARAMQILRARLFDMERSRAANERSEARRLQVGTGDRSERIRTYNFPQGRVTDHRINLTLYKLDRVMEGELDEVIDALIADHQSKLLAAEGAES.

Gln235 carries the N5-methylglutamine modification.

The protein belongs to the prokaryotic/mitochondrial release factor family. Methylated by PrmC. Methylation increases the termination efficiency of RF1.

It localises to the cytoplasm. In terms of biological role, peptide chain release factor 1 directs the termination of translation in response to the peptide chain termination codons UAG and UAA. This is Peptide chain release factor 1 from Chelativorans sp. (strain BNC1).